The sequence spans 279 residues: Eukaryotic translation initiation factor 3 subunit G (279 aa).

2 disordered regions span residues 69–90 (AKYGKEKHSSPGPDTSTTQLGE) and 149–193 (LNGG…EARD). Position 77 is a phosphoserine (serine 77). The region spanning 196–275 (TTLKVSQLNT…LILHLEWSKK (80 aa)) is the RRM domain.

This sequence belongs to the eIF-3 subunit G family. As to quaternary structure, component of the eukaryotic translation initiation factor 3 (eIF-3) complex.

The protein localises to the cytoplasm. Functionally, RNA-binding component of the eukaryotic translation initiation factor 3 (eIF-3) complex, which is involved in protein synthesis of a specialized repertoire of mRNAs and, together with other initiation factors, stimulates binding of mRNA and methionyl-tRNAi to the 40S ribosome. The eIF-3 complex specifically targets and initiates translation of a subset of mRNAs involved in cell proliferation. This subunit can bind 18S rRNA. The protein is Eukaryotic translation initiation factor 3 subunit G of Lodderomyces elongisporus (strain ATCC 11503 / CBS 2605 / JCM 1781 / NBRC 1676 / NRRL YB-4239) (Yeast).